The chain runs to 781 residues: LPS-assembly protein LptD (781 aa).

Residues 1–24 form the signal peptide; it reads MKKNYYTVLSLSILTALYSTSSQA.

Belongs to the LptD family. As to quaternary structure, component of the lipopolysaccharide transport and assembly complex. Interacts with LptE and LptA.

The protein resides in the cell outer membrane. Functionally, together with LptE, is involved in the assembly of lipopolysaccharide (LPS) at the surface of the outer membrane. This chain is LPS-assembly protein LptD, found in Histophilus somni (strain 129Pt) (Haemophilus somnus).